The following is a 291-amino-acid chain: Popeye domain-containing protein 3 (291 aa).

A glycan (N-linked (GlcNAc...) asparagine) is linked at asparagine 4. Helical transmembrane passes span 27–44, 48–70, and 77–99; these read GAIY…FMGG, FGLL…WAWV, and IFSW…AYQV.

This sequence belongs to the popeye family. Expressed predominantly in skeletal muscle (at protein level). Also detected in heart.

The protein localises to the membrane. Its function is as follows. May play a role in the maintenance of heart function mediated, at least in part, through cAMP-binding. May play a role in the regulation of KCNK2/TREK-1-mediated current amplitude. The polypeptide is Popeye domain-containing protein 3 (POPDC3) (Homo sapiens (Human)).